A 247-amino-acid polypeptide reads, in one-letter code: ATP synthase subunit a, chloroplastic (247 aa).

5 consecutive transmembrane segments (helical) span residues 38-58 (QVLI…TIAV), 95-115 (VPFI…GALL), 134-154 (INTT…AGLT), 199-219 (LVVV…VMFL), and 220-240 (GLFT…AYIG).

The protein belongs to the ATPase A chain family. As to quaternary structure, F-type ATPases have 2 components, CF(1) - the catalytic core - and CF(0) - the membrane proton channel. CF(1) has five subunits: alpha(3), beta(3), gamma(1), delta(1), epsilon(1). CF(0) has four main subunits: a, b, b' and c.

Its subcellular location is the plastid. The protein resides in the chloroplast thylakoid membrane. Functionally, key component of the proton channel; it plays a direct role in the translocation of protons across the membrane. In Buxus microphylla (Littleleaf boxwood), this protein is ATP synthase subunit a, chloroplastic.